The primary structure comprises 427 residues: Glutamate-1-semialdehyde 2,1-aminomutase (427 aa).

Lysine 265 is subject to N6-(pyridoxal phosphate)lysine.

The protein belongs to the class-III pyridoxal-phosphate-dependent aminotransferase family. HemL subfamily. As to quaternary structure, homodimer. The cofactor is pyridoxal 5'-phosphate.

It is found in the cytoplasm. The catalysed reaction is (S)-4-amino-5-oxopentanoate = 5-aminolevulinate. It participates in porphyrin-containing compound metabolism; protoporphyrin-IX biosynthesis; 5-aminolevulinate from L-glutamyl-tRNA(Glu): step 2/2. The polypeptide is Glutamate-1-semialdehyde 2,1-aminomutase (Bordetella parapertussis (strain 12822 / ATCC BAA-587 / NCTC 13253)).